The sequence spans 195 residues: Protein hunchback (195 aa).

Disordered regions lie at residues 16 to 57 (SHHH…SHTN), 64 to 83 (LKQQ…QQPM), and 155 to 195 (LTPP…KYMA). Positions 17-29 (HHHHHHHAHHSHH) are enriched in basic residues. Low complexity-rich tracts occupy residues 33–44 (SNSNSNASSPHQ) and 66–81 (QQQQ…QQQQ). Over residues 176–195 (EPEKEHDLMSNSSEDMKYMA) the composition is skewed to basic and acidic residues.

This sequence belongs to the hunchback C2H2-type zinc-finger protein family.

It is found in the nucleus. In terms of biological role, gap class segmentation protein that controls development of head structures. The chain is Protein hunchback (hb) from Drosophila dasycnemia (Fruit fly).